Consider the following 577-residue polypeptide: Thrombomodulin (577 aa).

A signal peptide spans 1-16 (MLGIFFLGVLAPASLG). Over 17-517 (LSALAKLQPT…GPPSARPVHS (501 aa)) the chain is Extracellular. The C-type lectin domain maps to 31–167 (VEHECFALFQ…TETQGFLCEF (137 aa)). A glycan (N-linked (GlcNAc...) asparagine) is linked at Asn113. A disulfide bond links Cys135 and Cys156. 2 consecutive EGF-like domains span residues 240–280 (GAWN…RSCA) and 283–323 (VVQS…HRCE). N-linked (GlcNAc...) asparagine glycosylation is present at Asn243. 18 cysteine pairs are disulfide-bonded: Cys244–Cys255, Cys251–Cys264, Cys266–Cys279, Cys287–Cys295, Cys291–Cys307, Cys309–Cys322, Cys328–Cys339, Cys335–Cys348, Cys350–Cys361, Cys368–Cys377, Cys373–Cys387, Cys389–Cys403, Cys407–Cys416, Cys412–Cys424, Cys426–Cys438, Cys444–Cys454, Cys449–Cys463, and Cys465–Cys479. Residue Asn256 is glycosylated (N-linked (GlcNAc...) asparagine). The EGF-like 3; calcium-binding domain maps to 324–362 (DVDDCKQGPNPCPQLCVNTKGGFECFCYDGYELVDGECV). EGF-like domains follow at residues 364–404 (LLDP…HKCE) and 403–439 (CEMF…SVCT). N-linked (GlcNAc...) asparagine glycosylation occurs at Asn408. One can recognise an EGF-like 6; calcium-binding domain in the interval 440 to 480 (DIDECSQGECFTSECRNFPGSYECICGPDTALAGQISKDCD). Positions 476–513 (SKDCDPIPVREDTKEEEGSGEPPVSPTPGSPTGPPSAR) are disordered. The segment covering 477-492 (KDCDPIPVREDTKEEE) has biased composition (basic and acidic residues). O-linked (Xyl...) (chondroitin sulfate) serine glycosylation is present at Ser494. Pro residues predominate over residues 498-512 (PVSPTPGSPTGPPSA). A helical transmembrane segment spans residues 518–541 (GVLIGISIASLSLVVALLALLCHL). Residues 542 to 577 (RKKQGAARAELEYKCASSAKEVVLQHVRTDRTLQKF) lie on the Cytoplasmic side of the membrane.

In terms of assembly, interacts with ITGAL, ITGAM and ITGB2. Interacts with thrombin/F2; this interaction switches the specificity of thrombin from a procoagulant to an anticoagulant and antifibrinolytic protease. Interacts with ANGP1 and ANGP2; these interactions significantly inhibit the generation of activated PC and TAFIa/CPB2 by the thrombin/thrombomodulin complex. Interacts with PF4; this interaction enhances generation of activated protein C. Interacts with HMGB1; this interaction inhibits HMGB1 inflammatory activity. In terms of tissue distribution, endothelial cells are unique in synthesizing thrombomodulin.

The protein localises to the membrane. In terms of biological role, endothelial cell receptor that plays a critical role in regulating several physiological processes including hemostasis, coagulation, fibrinolysis, inflammation, and angiogenesis. Acts as a cofactor for thrombin activation of protein C/PROC on the surface of vascular endothelial cells leading to initiation of the activated protein C anticoagulant pathway. Also accelerates the activation of the plasma carboxypeptidase B2/CPB2, which catalyzes removal of C-terminal basic amino acids from its substrates including kinins or anaphylatoxins leading to fibrinolysis inhibition. Plays critical protective roles in changing the cleavage specificity of protease-activated receptor 1/PAR1, inhibiting endothelial cell permeability and inflammation. Suppresses inflammation distinctly from its anticoagulant cofactor activity by sequestering HMGB1 thereby preventing it from engaging cellular receptors such as RAGE and contributing to the inflammatory response. The protein is Thrombomodulin (Thbd) of Mus musculus (Mouse).